A 453-amino-acid chain; its full sequence is Bifunctional protein GlmU (453 aa).

The tract at residues 1-228 (MPHWAAVIMA…VHEALGINSR (228 aa)) is pyrophosphorylase. Residues K23, Q73, 78 to 79 (GT), 100 to 102 (SGD), G139, E153, N168, and N226 contribute to the UDP-N-acetyl-alpha-D-glucosamine site. A Mg(2+)-binding site is contributed by D102. Mg(2+) is bound at residue N226. The tract at residues 229–249 (AQLAAAEDVARQRILSYWMEE) is linker. An N-acetyltransferase region spans residues 250–453 (GVTIIDPRST…IENWVRNKKK (204 aa)). 2 residues coordinate UDP-N-acetyl-alpha-D-glucosamine: R331 and K349. H361 functions as the Proton acceptor in the catalytic mechanism. The UDP-N-acetyl-alpha-D-glucosamine site is built by Y364 and N375. Residues A378, 384-385 (NY), S403, A421, and R438 each bind acetyl-CoA.

This sequence in the N-terminal section; belongs to the N-acetylglucosamine-1-phosphate uridyltransferase family. In the C-terminal section; belongs to the transferase hexapeptide repeat family. As to quaternary structure, homotrimer. It depends on Mg(2+) as a cofactor.

Its subcellular location is the cytoplasm. The enzyme catalyses alpha-D-glucosamine 1-phosphate + acetyl-CoA = N-acetyl-alpha-D-glucosamine 1-phosphate + CoA + H(+). It catalyses the reaction N-acetyl-alpha-D-glucosamine 1-phosphate + UTP + H(+) = UDP-N-acetyl-alpha-D-glucosamine + diphosphate. Its pathway is nucleotide-sugar biosynthesis; UDP-N-acetyl-alpha-D-glucosamine biosynthesis; N-acetyl-alpha-D-glucosamine 1-phosphate from alpha-D-glucosamine 6-phosphate (route II): step 2/2. It functions in the pathway nucleotide-sugar biosynthesis; UDP-N-acetyl-alpha-D-glucosamine biosynthesis; UDP-N-acetyl-alpha-D-glucosamine from N-acetyl-alpha-D-glucosamine 1-phosphate: step 1/1. It participates in bacterial outer membrane biogenesis; LPS lipid A biosynthesis. Functionally, catalyzes the last two sequential reactions in the de novo biosynthetic pathway for UDP-N-acetylglucosamine (UDP-GlcNAc). The C-terminal domain catalyzes the transfer of acetyl group from acetyl coenzyme A to glucosamine-1-phosphate (GlcN-1-P) to produce N-acetylglucosamine-1-phosphate (GlcNAc-1-P), which is converted into UDP-GlcNAc by the transfer of uridine 5-monophosphate (from uridine 5-triphosphate), a reaction catalyzed by the N-terminal domain. This is Bifunctional protein GlmU from Desulfitobacterium hafniense (strain Y51).